The chain runs to 3083 residues: Genome polyprotein (3083 aa).

The Peptidase S30 domain maps to 173–313 (VVRSASVNNL…VFFYDDVDHY (141 aa)). Residues His-226, Glu-235, and Ser-267 each act as for P1 proteinase activity in the active site. The short motif at 365–368 (KLSC) is the Involved in interaction with stylet and aphid transmission element. An Involved in virions binding and aphid transmission motif is present at residues 621 to 623 (PTK). Positions 647–769 (MYIAKEGYCY…QSEMKHYRVG (123 aa)) constitute a Peptidase C6 domain. Active-site for helper component proteinase activity residues include Cys-655 and His-728. Residues 1239-1391 (EIASSNEGEF…TQFAVKVKTE (153 aa)) form the Helicase ATP-binding domain. 1252–1259 (GAVGSGKS) is a binding site for ATP. The DECH box signature appears at 1341 to 1344 (DECH). The 160-residue stretch at 1410–1569 (DMIQHGNNIL…GLSVTTHGVS (160 aa)) folds into the Helicase C-terminal domain. A Nuclear localization signal motif is present at residues 1894–1903 (KRGKVKGNNS). Position 1918 is an O-(5'-phospho-RNA)-tyrosine (Tyr-1918). Positions 2045–2263 (SKSIYKGVRD…IAWGLLNLVD (219 aa)) constitute a Peptidase C4 domain. Residues His-2090, Asp-2125, and Cys-2195 each act as for nuclear inclusion protein A activity in the active site. Positions 2529-2653 (WLYCHADGSQ…AVKDEDSGLL (125 aa)) constitute a RdRp catalytic domain. A disordered region spans residues 2805-2854 (SDTQTKEADAGAAKRDKDEEKEKKKDVASSSANEKTMTATAKDKDVNAGS). Over residues 2808 to 2831 (QTKEADAGAAKRDKDEEKEKKKDV) the composition is skewed to basic and acidic residues. A compositionally biased stretch (polar residues) spans 2832–2843 (ASSSANEKTMTA).

This sequence belongs to the potyviridae genome polyprotein family. In terms of assembly, interacts with host eIF4E protein (via cap-binding region); this interaction mediates the translation of the VPg-viral RNA conjugates. Part of a complex that comprises VPg, RNA, host EIF4E and EIF4G; this interaction mediates the translation of the VPg-viral RNA conjugates. VPg is uridylylated by the polymerase and is covalently attached to the 5'-end of the genomic RNA. This uridylylated form acts as a nucleotide-peptide primer for the polymerase. Post-translationally, potyviral RNA is expressed as two polyproteins which undergo post-translational proteolytic processing. Genome polyprotein is processed by NIa-pro, P1 and HC-pro proteinases resulting in the production of at least ten individual proteins. P3N-PIPO polyprotein is cleaved by P1 and HC-pro proteinases resulting in the production of three individual proteins. The P1 proteinase and the HC-pro cleave only their respective C-termini autocatalytically. 6K1 is essential for proper proteolytic separation of P3 from CI.

The protein resides in the host cytoplasmic vesicle. The protein localises to the host nucleus. It is found in the virion. It catalyses the reaction RNA(n) + a ribonucleoside 5'-triphosphate = RNA(n+1) + diphosphate. The catalysed reaction is Hydrolyzes glutaminyl bonds, and activity is further restricted by preferences for the amino acids in P6 - P1' that vary with the species of potyvirus, e.g. Glu-Xaa-Xaa-Tyr-Xaa-Gln-|-(Ser or Gly) for the enzyme from tobacco etch virus. The natural substrate is the viral polyprotein, but other proteins and oligopeptides containing the appropriate consensus sequence are also cleaved.. It carries out the reaction Hydrolyzes a Gly-|-Gly bond at its own C-terminus, commonly in the sequence -Tyr-Xaa-Val-Gly-|-Gly, in the processing of the potyviral polyprotein.. In terms of biological role, required for aphid transmission and also has proteolytic activity. Only cleaves a Gly-Gly dipeptide at its own C-terminus. Interacts with virions and aphid stylets. Acts as a suppressor of RNA-mediated gene silencing, also known as post-transcriptional gene silencing (PTGS), a mechanism of plant viral defense that limits the accumulation of viral RNAs. May have RNA-binding activity. Its function is as follows. Has helicase activity. It may be involved in replication. Indispensable for virus replication. Functionally, mediates the cap-independent, EIF4E-dependent translation of viral genomic RNAs. Binds to the cap-binding site of host EIF4E and thus interferes with the host EIF4E-dependent mRNA export and translation. VPg-RNA directly binds EIF4E and is a template for transcription. Also forms trimeric complexes with EIF4E-EIF4G, which are templates for translation. In terms of biological role, has RNA-binding and proteolytic activities. Its function is as follows. An RNA-dependent RNA polymerase that plays an essential role in the virus replication. Involved in aphid transmission, cell-to-cell and systemis movement, encapsidation of the viral RNA and in the regulation of viral RNA amplification. In Zucchini yellow mosaic virus (strain Reunion Island) (ZYMV), this protein is Genome polyprotein.